The following is a 195-amino-acid chain: uncharacterized protein (195 aa).

One can recognise a Nudix hydrolase domain in the interval 34–165 (SHHAAVLIPI…WLDIHRGGVN (132 aa)). The Nudix box motif lies at 72 to 94 (GKADPQDSSLIETALREAEEEVA). The Mg(2+) site is built by glutamate 88 and glutamate 92.

This sequence belongs to the Nudix hydrolase family. PCD1 subfamily. Mn(2+) is required as a cofactor. Requires Mg(2+) as cofactor.

Probably mediates the hydrolysis of some nucleoside diphosphate derivatives. This is an uncharacterized protein from Yersinia enterocolitica serotype O:8 / biotype 1B (strain NCTC 13174 / 8081).